The primary structure comprises 317 residues: Thiamine thiazole synthase (317 aa).

Substrate is bound by residues cysteine 78, 99-100 (EA), glycine 107, and valine 172. Cysteine 206 is subject to 2,3-didehydroalanine (Cys). Residues aspartate 208, histidine 223, methionine 275, and 285 to 287 (RMG) contribute to the substrate site.

Belongs to the THI4 family. Homooctamer. It depends on Fe cation as a cofactor. Post-translationally, during the catalytic reaction, a sulfide is transferred from Cys-206 to a reaction intermediate, generating a dehydroalanine residue.

It is found in the cytoplasm. The protein resides in the nucleus. It catalyses the reaction [ADP-thiazole synthase]-L-cysteine + glycine + NAD(+) = [ADP-thiazole synthase]-dehydroalanine + ADP-5-ethyl-4-methylthiazole-2-carboxylate + nicotinamide + 3 H2O + 2 H(+). In terms of biological role, involved in biosynthesis of the thiamine precursor thiazole. Catalyzes the conversion of NAD and glycine to adenosine diphosphate 5-(2-hydroxyethyl)-4-methylthiazole-2-carboxylic acid (ADT), an adenylated thiazole intermediate. The reaction includes an iron-dependent sulfide transfer from a conserved cysteine residue of the protein to a thiazole intermediate. The enzyme can only undergo a single turnover, which suggests it is a suicide enzyme. May have additional roles in adaptation to various stress conditions and in DNA damage tolerance. The polypeptide is Thiamine thiazole synthase (Yarrowia lipolytica (strain CLIB 122 / E 150) (Yeast)).